Consider the following 43-residue polypeptide: Potassium channel toxin gamma-KTx 4.2 (43 aa).

4 disulfide bridges follow: Cys5-Cys23, Cys11-Cys34, Cys20-Cys39, and Cys24-Cys41.

This sequence belongs to the ergtoxin family. Gamma-KTx 4 subfamily. Expressed by the venom gland.

It localises to the secreted. Its function is as follows. Reversibly blocks Kv11/ERG potassium channels. In Centruroides noxius (Mexican scorpion), this protein is Potassium channel toxin gamma-KTx 4.2.